Here is a 165-residue protein sequence, read N- to C-terminus: Acireductone dioxygenase (165 aa).

Fe(2+) is bound by residues His-90, His-92, Glu-96, and His-134. Residues His-90, His-92, Glu-96, and His-134 each coordinate Ni(2+).

Belongs to the acireductone dioxygenase (ARD) family. In terms of assembly, monomer. Fe(2+) serves as cofactor. The cofactor is Ni(2+).

The catalysed reaction is 1,2-dihydroxy-5-(methylsulfanyl)pent-1-en-3-one + O2 = 3-(methylsulfanyl)propanoate + CO + formate + 2 H(+). It catalyses the reaction 1,2-dihydroxy-5-(methylsulfanyl)pent-1-en-3-one + O2 = 4-methylsulfanyl-2-oxobutanoate + formate + 2 H(+). The protein operates within amino-acid biosynthesis; L-methionine biosynthesis via salvage pathway; L-methionine from S-methyl-5-thio-alpha-D-ribose 1-phosphate: step 5/6. In terms of biological role, catalyzes 2 different reactions between oxygen and the acireductone 1,2-dihydroxy-3-keto-5-methylthiopentene (DHK-MTPene) depending upon the metal bound in the active site. Fe-containing acireductone dioxygenase (Fe-ARD) produces formate and 2-keto-4-methylthiobutyrate (KMTB), the alpha-ketoacid precursor of methionine in the methionine recycle pathway. Ni-containing acireductone dioxygenase (Ni-ARD) produces methylthiopropionate, carbon monoxide and formate, and does not lie on the methionine recycle pathway. In Rhodopseudomonas palustris (strain TIE-1), this protein is Acireductone dioxygenase.